Reading from the N-terminus, the 181-residue chain is Vacuolar ATPase assembly protein VMA22 (181 aa).

Serine 2 is subject to N-acetylalanine. 2 stretches are compositionally biased toward basic and acidic residues: residues 93–107 and 114–125; these read AQDK…DNKL and TKPEKQKTQSHK. The interval 93–125 is disordered; the sequence is AQDKQEKKEEEDNKLTQRKKGTKPEKQKTQSHK.

Required for V-ATPase activity. This Saccharomyces cerevisiae (strain ATCC 204508 / S288c) (Baker's yeast) protein is Vacuolar ATPase assembly protein VMA22 (VMA22).